A 502-amino-acid polypeptide reads, in one-letter code: ATP synthase subunit alpha (502 aa).

169-176 (GDRQTGKT) is a binding site for ATP.

The protein belongs to the ATPase alpha/beta chains family. As to quaternary structure, F-type ATPases have 2 components, CF(1) - the catalytic core - and CF(0) - the membrane proton channel. CF(1) has five subunits: alpha(3), beta(3), gamma(1), delta(1), epsilon(1). CF(0) has three main subunits: a(1), b(2) and c(9-12). The alpha and beta chains form an alternating ring which encloses part of the gamma chain. CF(1) is attached to CF(0) by a central stalk formed by the gamma and epsilon chains, while a peripheral stalk is formed by the delta and b chains.

The protein resides in the cell inner membrane. It catalyses the reaction ATP + H2O + 4 H(+)(in) = ADP + phosphate + 5 H(+)(out). In terms of biological role, produces ATP from ADP in the presence of a proton gradient across the membrane. The alpha chain is a regulatory subunit. In Thermodesulfovibrio yellowstonii (strain ATCC 51303 / DSM 11347 / YP87), this protein is ATP synthase subunit alpha.